The primary structure comprises 344 residues: MIDRYSLLRPWLFCIDPEKAHNLTLSNLDRAQRWGFLERLITKPINDPQVLCGIEFSNPVGLAAGLDKDGKYIDALAALGFGFLEIGTVTPRPQPGNPKPRMFRLPEAQAIINRMGFNNDGVEACVARVRCSKFWQNGGVLGMNIGKNASTPIEEASRDYILAMEAVYEIATYITINISSPNTQNLRALQGEEMLRELLGSLGEARKHLCDRHGVRKPLFLKIAPNLDQGDINLIADLLLEFGIDAVIATNTTISRDAVKGMEFGEEAGGLSGAPVRNASNIVIKALKARLGNQLPIIGVGGIMSGVDAREKIMAGASLVQLYSGLIYRGPDLVYKCATVLRQP.

FMN contacts are provided by residues 64-68 and Thr-88; that span reads AGLDK. Lys-68 contacts substrate. 113–117 contacts substrate; sequence NRMGF. FMN-binding residues include Asn-144 and Asn-177. Asn-177 provides a ligand contact to substrate. Ser-180 serves as the catalytic Nucleophile. Residue Asn-182 coordinates substrate. FMN-binding residues include Lys-222 and Thr-250. Substrate is bound at residue 251–252; the sequence is NT. FMN contacts are provided by residues Gly-273, Gly-302, and 323–324; that span reads YS.

This sequence belongs to the dihydroorotate dehydrogenase family. Type 2 subfamily. In terms of assembly, monomer. FMN is required as a cofactor.

It is found in the cell membrane. It catalyses the reaction (S)-dihydroorotate + a quinone = orotate + a quinol. It participates in pyrimidine metabolism; UMP biosynthesis via de novo pathway; orotate from (S)-dihydroorotate (quinone route): step 1/1. In terms of biological role, catalyzes the conversion of dihydroorotate to orotate with quinone as electron acceptor. The protein is Dihydroorotate dehydrogenase (quinone) of Polynucleobacter necessarius subsp. necessarius (strain STIR1).